Consider the following 75-residue polypeptide: Small ribosomal subunit protein bS18 (75 aa).

Belongs to the bacterial ribosomal protein bS18 family. Part of the 30S ribosomal subunit. Forms a tight heterodimer with protein bS6.

In terms of biological role, binds as a heterodimer with protein bS6 to the central domain of the 16S rRNA, where it helps stabilize the platform of the 30S subunit. This chain is Small ribosomal subunit protein bS18, found in Roseobacter denitrificans (strain ATCC 33942 / OCh 114) (Erythrobacter sp. (strain OCh 114)).